The following is a 105-amino-acid chain: NADH dehydrogenase [ubiquinone] 1 beta subcomplex subunit 2, mitochondrial (105 aa).

The transit peptide at 1–33 (MSALTRLASFARVGGRLFRSGCARTAGDGGVRH) directs the protein to the mitochondrion. Positions 85-105 (PYPDPSQWTDEELGIPPDDED) are disordered. A compositionally biased stretch (acidic residues) spans 93–105 (TDEELGIPPDDED).

This sequence belongs to the complex I NDUFB2 subunit family. In terms of assembly, complex I is composed of 45 different subunits.

It is found in the mitochondrion inner membrane. Functionally, accessory subunit of the mitochondrial membrane respiratory chain NADH dehydrogenase (Complex I), that is believed not to be involved in catalysis. Complex I functions in the transfer of electrons from NADH to the respiratory chain. The immediate electron acceptor for the enzyme is believed to be ubiquinone. This is NADH dehydrogenase [ubiquinone] 1 beta subcomplex subunit 2, mitochondrial (NDUFB2) from Homo sapiens (Human).